An 804-amino-acid polypeptide reads, in one-letter code: Endoplasmin (804 aa).

An N-terminal signal peptide occupies residues M1–A21. The SRT pseudosubstrate motif signature appears at S42 to T44. Residue N62 is glycosylated (N-linked (GlcNAc...) asparagine). Phosphoserine is present on S64. N-linked (GlcNAc...) asparagine glycosylation occurs at N107. ATP-binding residues include N107, D149, and N162. N6-(2-hydroxyisobutyryl)lysine is present on K168. S172 carries the phosphoserine modification. Residue F199 coordinates ATP. A glycan (N-linked (GlcNAc...) asparagine) is linked at N217. A disordered region spans residues T288–T323. Residues V289 to D317 are compositionally biased toward acidic residues. Phosphoserine is present on residues S306 and S403. K404 is modified (N6-succinyllysine). A glycan (N-linked (GlcNAc...) asparagine) is linked at N445. Phosphoserine is present on S447. K479 is modified (N6-acetyllysine). N-linked (GlcNAc...) asparagine glycans are attached at residues N481 and N502. Residue K633 is modified to N6-succinyllysine. Positions D750 to L804 are disordered. Positions E757–E792 are enriched in acidic residues. T786 is subject to Phosphothreonine. Basic and acidic residues predominate over residues T793–L804. Positions K801 to L804 match the Prevents secretion from ER motif.

Belongs to the heat shock protein 90 family. As to quaternary structure, homodimer; disulfide-linked. Component of an EIF2 complex at least composed of CELF1/CUGBP1, CALR, CALR3, EIF2S1, EIF2S2, HSP90B1 and HSPA5. Part of a large chaperone multiprotein complex comprising DNAJB11, HSP90B1, HSPA5, HYOU, PDIA2, PDIA4, PDIA6, PPIB, SDF2L1, UGGT1 and very small amounts of ERP29, but not, or at very low levels, CALR nor CANX. Interacts with AIMP1; regulates its retention in the endoplasmic reticulum. Hyperglycosylated form interacts with OS9; promoting its degradation by the endoplasmic reticulum associated degradation (ERAD). Interacts with CNPY3. This interaction is disrupted in the presence of ATP. Interacts with TLR4 and TLR9, but not with TLR3. Interacts with MZB1 in a calcium-dependent manner. Interacts with METTL23. Interacts with IL1B; the interaction facilitates cargo translocation into the ERGIC. Interacts with EIF2AK3. Post-translationally, phosphorylated by CK2. In terms of processing, N-glycosylated cotranslationally at Asn-217 by STT3A-containing OST-A complex: this glycosylation is constitutive. In response to various stress, 5 additional facultative sites (Asn-62, Asn-107, Asn-445, Asn-481 and Asn-502) can be glycosylated post-translationally by STT3B-containing OST-B complex, leading to a hyperglycosylated form that is degraded by the ER-associated degradation (ERAD) pathway. In normal conditions, the OST-A complex together with CCDC134 prevent glycosylation at facultative sites during protein folding, thereby preventing hyperglycosylation. Mechanistically, nascent HSP90B1 is tethered during translation to a specialized CCDC134-containing translocon that forms a microenvironment for its folding, in which STT3A associates with the SRT pseudosubstrate motif, and prevents access to facultative glycosylation sites until folding is completed, rendering its facultative sites inaccessible to the OST-B complex.

It is found in the endoplasmic reticulum lumen. It localises to the sarcoplasmic reticulum lumen. The protein resides in the melanosome. It catalyses the reaction ATP + H2O = ADP + phosphate + H(+). Functionally, ATP-dependent chaperone involved in the processing of proteins in the endoplasmic reticulum, regulating their transport. Together with MESD, acts as a modulator of the Wnt pathway by promoting the folding of LRP6, a coreceptor of the canonical Wnt pathway. When associated with CNPY3, required for proper folding of Toll-like receptors. Promotes folding and trafficking of TLR4 to the cell surface. May participate in the unfolding of cytosolic leaderless cargos (lacking the secretion signal sequence) such as the interleukin 1/IL-1 to facilitate their translocation into the ERGIC (endoplasmic reticulum-Golgi intermediate compartment) and secretion; the translocation process is mediated by the cargo receptor TMED10. The polypeptide is Endoplasmin (HSP90B1) (Bos taurus (Bovine)).